Consider the following 429-residue polypeptide: 3-phosphoshikimate 1-carboxyvinyltransferase (429 aa).

Residues Lys-11, Ser-12, and Arg-16 each contribute to the 3-phosphoshikimate site. A phosphoenolpyruvate-binding site is contributed by Lys-11. The phosphoenolpyruvate site is built by Gly-82 and Arg-110. Residues Ser-155, Gln-157, Asp-302, and Lys-329 each coordinate 3-phosphoshikimate. Gln-157 lines the phosphoenolpyruvate pocket. Asp-302 acts as the Proton acceptor in catalysis. Residues Arg-333 and Arg-385 each coordinate phosphoenolpyruvate.

Belongs to the EPSP synthase family. In terms of assembly, monomer.

It localises to the cytoplasm. It catalyses the reaction 3-phosphoshikimate + phosphoenolpyruvate = 5-O-(1-carboxyvinyl)-3-phosphoshikimate + phosphate. Its pathway is metabolic intermediate biosynthesis; chorismate biosynthesis; chorismate from D-erythrose 4-phosphate and phosphoenolpyruvate: step 6/7. Functionally, catalyzes the transfer of the enolpyruvyl moiety of phosphoenolpyruvate (PEP) to the 5-hydroxyl of shikimate-3-phosphate (S3P) to produce enolpyruvyl shikimate-3-phosphate and inorganic phosphate. The polypeptide is 3-phosphoshikimate 1-carboxyvinyltransferase (Helicobacter pylori (strain J99 / ATCC 700824) (Campylobacter pylori J99)).